We begin with the raw amino-acid sequence, 186 residues long: Ribosome-recycling factor (186 aa).

Belongs to the RRF family.

The protein resides in the cytoplasm. In terms of biological role, responsible for the release of ribosomes from messenger RNA at the termination of protein biosynthesis. May increase the efficiency of translation by recycling ribosomes from one round of translation to another. This is Ribosome-recycling factor from Phocaeicola vulgatus (strain ATCC 8482 / DSM 1447 / JCM 5826 / CCUG 4940 / NBRC 14291 / NCTC 11154) (Bacteroides vulgatus).